We begin with the raw amino-acid sequence, 510 residues long: MHFSSLSLPLTALSLVTPSLAYPQFKFEQRVARSNSSESRANAVKEAFVHAWDGYMQYAYPHDELHPISNGVGDSRNGWGASAVDALSTAVIMGNETIVNQILDHIATIDYSKTDDQVSLFETTIRYLGGMLSGYDLLKGPASNLVKDQAKVKTLLDQSQNLADVLKFAFDTPSGIPYNNINITSHGNDGATTNGLAVTGTLVLEWTRLSDLTGDTEYAQLSQKAEDYLLNPSPKSAEPFEGLVGSHINISNGAFADGQVSWNGGDDSFYEYLIKMYVYDPKRFSTYGDRWVKAAESSIKHLASHPEKRPDLTFLASYNDGQYGLSSQHLTCFDGGSFLLGGTVLDRDDFIQFGLDLVKGCHETYNQTLTGIGPESFGWDPKNVPSDQKELYERAGFYISSGAYILRPEVIESFYYAWRITGQEIYREWVWNAFVNINKYCRTDSGFAGLTNVNAANGGGRYDNQESFLFAEVLKYVYLTFAPDNEWQVQRGKGNKFVYNTEAHPVRVAA.

A signal peptide spans 1–21 (MHFSSLSLPLTALSLVTPSLA). N-linked (GlcNAc...) asparagine glycosylation is found at asparagine 35, asparagine 95, asparagine 182, and asparagine 249. An intrachain disulfide couples cysteine 332 to cysteine 361. N-linked (GlcNAc...) asparagine glycosylation occurs at asparagine 366. Catalysis depends on glutamate 375, which acts as the Proton donor. Ca(2+) is bound at residue threonine 501.

This sequence belongs to the glycosyl hydrolase 47 family. As to quaternary structure, monomer. Ca(2+) serves as cofactor. The cofactor is Mg(2+).

The protein localises to the cytoplasmic vesicle lumen. The catalysed reaction is N(4)-(alpha-D-Man-(1-&gt;2)-alpha-D-Man-(1-&gt;2)-alpha-D-Man-(1-&gt;3)-[alpha-D-Man-(1-&gt;2)-alpha-D-Man-(1-&gt;3)-[alpha-D-Man-(1-&gt;2)-alpha-D-Man-(1-&gt;6)]-alpha-D-Man-(1-&gt;6)]-beta-D-Man-(1-&gt;4)-beta-D-GlcNAc-(1-&gt;4)-beta-D-GlcNAc)-L-asparaginyl-[protein] (N-glucan mannose isomer 9A1,2,3B1,2,3) + 4 H2O = N(4)-(alpha-D-Man-(1-&gt;3)-[alpha-D-Man-(1-&gt;3)-[alpha-D-Man-(1-&gt;6)]-alpha-D-Man-(1-&gt;6)]-beta-D-Man-(1-&gt;4)-beta-D-GlcNAc-(1-&gt;4)-beta-D-GlcNAc)-L-asparaginyl-[protein] (N-glucan mannose isomer 5A1,2) + 4 beta-D-mannose. The enzyme catalyses N(4)-(alpha-D-Man-(1-&gt;2)-alpha-D-Man-(1-&gt;2)-alpha-D-Man-(1-&gt;3)-[alpha-D-Man-(1-&gt;3)-[alpha-D-Man-(1-&gt;2)-alpha-D-Man-(1-&gt;6)]-alpha-D-Man-(1-&gt;6)]-beta-D-Man-(1-&gt;4)-beta-D-GlcNAc-(1-&gt;4)-beta-D-GlcNAc)-L-asparaginyl-[protein] (N-glucan mannose isomer 8A1,2,3B1,3) + 3 H2O = N(4)-(alpha-D-Man-(1-&gt;3)-[alpha-D-Man-(1-&gt;3)-[alpha-D-Man-(1-&gt;6)]-alpha-D-Man-(1-&gt;6)]-beta-D-Man-(1-&gt;4)-beta-D-GlcNAc-(1-&gt;4)-beta-D-GlcNAc)-L-asparaginyl-[protein] (N-glucan mannose isomer 5A1,2) + 3 beta-D-mannose. It functions in the pathway protein modification; protein glycosylation. In terms of biological role, involved in the maturation of Asn-linked oligosaccharides. Progressively trims alpha-1,2-linked mannose residues from Man(9)GlcNAc(2) to produce Man(5)GlcNAc(2). This is Probable mannosyl-oligosaccharide alpha-1,2-mannosidase 1B (mns1B) from Aspergillus flavus (strain ATCC 200026 / FGSC A1120 / IAM 13836 / NRRL 3357 / JCM 12722 / SRRC 167).